Reading from the N-terminus, the 98-residue chain is DNA-binding protein Fis (98 aa).

Residues 74–93 (QTRAALMMGINRGTLRKKLK) constitute a DNA-binding region (H-T-H motif).

The protein belongs to the transcriptional regulatory Fis family. As to quaternary structure, homodimer.

Its function is as follows. Activates ribosomal RNA transcription. Plays a direct role in upstream activation of rRNA promoters. The polypeptide is DNA-binding protein Fis (Pectobacterium atrosepticum (strain SCRI 1043 / ATCC BAA-672) (Erwinia carotovora subsp. atroseptica)).